Consider the following 490-residue polypeptide: Probable cytosol aminopeptidase (490 aa).

Mn(2+) contacts are provided by Lys257 and Asp262. The active site involves Lys269. Positions 281, 341, and 343 each coordinate Mn(2+). The active site involves Arg345.

This sequence belongs to the peptidase M17 family. Requires Mn(2+) as cofactor.

The protein localises to the cytoplasm. The enzyme catalyses Release of an N-terminal amino acid, Xaa-|-Yaa-, in which Xaa is preferably Leu, but may be other amino acids including Pro although not Arg or Lys, and Yaa may be Pro. Amino acid amides and methyl esters are also readily hydrolyzed, but rates on arylamides are exceedingly low.. It catalyses the reaction Release of an N-terminal amino acid, preferentially leucine, but not glutamic or aspartic acids.. Its function is as follows. Presumably involved in the processing and regular turnover of intracellular proteins. Catalyzes the removal of unsubstituted N-terminal amino acids from various peptides. The chain is Probable cytosol aminopeptidase from Prochlorococcus marinus (strain MIT 9215).